The following is a 447-amino-acid chain: M-phase inducer phosphatase 3 (447 aa).

Ser2 is subject to N-acetylserine. Phosphoserine occurs at positions 20, 38, 56, 60, and 63. Phosphothreonine; by CDK1 is present on Thr66. Residues 81–90 (MSASPLTTSA) show a composition bias toward polar residues. Residues 81–109 (MSASPLTTSADLEDNGSLDSSGPLDRQLT) are disordered. Ser128 carries the phosphoserine modification. Position 129 is a phosphothreonine (Thr129). Ser192 is modified (phosphoserine; by CDK1). A phosphoserine; by PLK3 mark is found at Ser213 and Ser220. The region spanning 294 to 401 (VIERFYIIDC…FFPEYMELCD (108 aa)) is the Rhodanese domain. Cys350 is a catalytic residue. Phosphoserine is present on Ser445.

This sequence belongs to the MPI phosphatase family. In terms of assembly, interacts with MAPK14 and 14-3-3 proteins. When phosphorylated on Ser-128 and/or Thr-129, interacts with PLK1. Interacts with MARK3/C-TAK1. Post-translationally, phosphorylated by PLK4. Phosphorylated by PLK1, leading to activate the phosphatase activity. Phosphorylated by CHEK1 and MAPKAPK2. This phosphorylation creates a binding site for 14-3-3 protein and inhibits the phosphatase activity. Phosphorylation by PLK3 at Ser-213 promotes nuclear translocation. Ser-220 is a minor phosphorylation site. Phosphorylation by CDK1 occurs at G2 and G2-M transition and leads to increased activity. As to expression, spleen and thymus.

It localises to the nucleus. It carries out the reaction O-phospho-L-tyrosyl-[protein] + H2O = L-tyrosyl-[protein] + phosphate. In terms of biological role, functions as a dosage-dependent inducer in mitotic control. Tyrosine protein phosphatase required for progression of the cell cycle. When phosphorylated, highly effective in activating G2 cells into prophase. Directly dephosphorylates CDK1 and activates its kinase activity. The sequence is that of M-phase inducer phosphatase 3 (Cdc25c) from Mus musculus (Mouse).